We begin with the raw amino-acid sequence, 226 residues long: RPA-interacting protein A (226 aa).

The tract at residues 1 to 45 (MEAERRHRALYKGTTPPWKETYRKRCVERLKRNRSKLLDKFRQVG) is interaction with importin beta. Residues 49–171 (HGGVGGSFLV…QCGVYINTQS (123 aa)) form an interaction with RPA1 region. Residues 144-219 (CPVCNRNYLT…ASLFMSCQEC (76 aa)) form an RIP-type zinc finger.

As to quaternary structure, interacts directly with the rpa1 subunit of RPA complex. Interacts with importin beta, but not with importin alpha. Forms a complex with the RPA complex and importin beta, which is dissociated by Ran-GTP.

The protein localises to the nucleus. Mediates the import of RPA complex into the nucleus, via its interaction with importin beta. This Xenopus laevis (African clawed frog) protein is RPA-interacting protein A (rpain-a).